The primary structure comprises 121 residues: MARIAGVDLPRDKRIVIGLTYIFGIGDSTAKKILENAGVSEDIRVRDLTPDQEEKIRAQVDQIQVEGDLRREVSMNIKRLQEIGSYRGMRHRRGLPVRGQHTKNNARTRKGKAVAIANKKK.

The tract at residues 88 to 121 (GMRHRRGLPVRGQHTKNNARTRKGKAVAIANKKK) is disordered.

Belongs to the universal ribosomal protein uS13 family. Part of the 30S ribosomal subunit. Forms a loose heterodimer with protein S19. Forms two bridges to the 50S subunit in the 70S ribosome.

Its function is as follows. Located at the top of the head of the 30S subunit, it contacts several helices of the 16S rRNA. In the 70S ribosome it contacts the 23S rRNA (bridge B1a) and protein L5 of the 50S subunit (bridge B1b), connecting the 2 subunits; these bridges are implicated in subunit movement. Contacts the tRNAs in the A and P-sites. This Limosilactobacillus reuteri subsp. reuteri (strain JCM 1112) (Lactobacillus reuteri) protein is Small ribosomal subunit protein uS13.